A 418-amino-acid chain; its full sequence is UDP-N-acetylglucosamine 1-carboxyvinyltransferase (418 aa).

22–23 contributes to the phosphoenolpyruvate binding site; that stretch reads KN. Position 92 (R92) interacts with UDP-N-acetyl-alpha-D-glucosamine. Catalysis depends on C116, which acts as the Proton donor. C116 carries the post-translational modification 2-(S-cysteinyl)pyruvic acid O-phosphothioketal. D305 and V327 together coordinate UDP-N-acetyl-alpha-D-glucosamine.

Belongs to the EPSP synthase family. MurA subfamily.

The protein localises to the cytoplasm. It catalyses the reaction phosphoenolpyruvate + UDP-N-acetyl-alpha-D-glucosamine = UDP-N-acetyl-3-O-(1-carboxyvinyl)-alpha-D-glucosamine + phosphate. It participates in cell wall biogenesis; peptidoglycan biosynthesis. Cell wall formation. Adds enolpyruvyl to UDP-N-acetylglucosamine. This Endomicrobium trichonymphae protein is UDP-N-acetylglucosamine 1-carboxyvinyltransferase.